The chain runs to 278 residues: Thiazole synthase (278 aa).

Lys-109 serves as the catalytic Schiff-base intermediate with DXP. Residues Gly-170, 197–198 (AG), and 219–220 (NT) contribute to the 1-deoxy-D-xylulose 5-phosphate site.

It belongs to the ThiG family. Homotetramer. Forms heterodimers with either ThiH or ThiS.

It is found in the cytoplasm. It catalyses the reaction [ThiS sulfur-carrier protein]-C-terminal-Gly-aminoethanethioate + 2-iminoacetate + 1-deoxy-D-xylulose 5-phosphate = [ThiS sulfur-carrier protein]-C-terminal Gly-Gly + 2-[(2R,5Z)-2-carboxy-4-methylthiazol-5(2H)-ylidene]ethyl phosphate + 2 H2O + H(+). The protein operates within cofactor biosynthesis; thiamine diphosphate biosynthesis. Its function is as follows. Catalyzes the rearrangement of 1-deoxy-D-xylulose 5-phosphate (DXP) to produce the thiazole phosphate moiety of thiamine. Sulfur is provided by the thiocarboxylate moiety of the carrier protein ThiS. In vitro, sulfur can be provided by H(2)S. The polypeptide is Thiazole synthase (Cupriavidus pinatubonensis (strain JMP 134 / LMG 1197) (Cupriavidus necator (strain JMP 134))).